Here is a 173-residue protein sequence, read N- to C-terminus: uncharacterized protein (173 aa).

This is an uncharacterized protein from Rhodospirillum rubrum.